Reading from the N-terminus, the 310-residue chain is Aspartate carbamoyltransferase catalytic subunit (310 aa).

Carbamoyl phosphate contacts are provided by Arg-59 and Thr-60. An L-aspartate-binding site is contributed by Lys-87. Carbamoyl phosphate-binding residues include Arg-109, His-137, and Gln-140. 2 residues coordinate L-aspartate: Arg-170 and Arg-225. Gly-266 and Pro-267 together coordinate carbamoyl phosphate.

Belongs to the aspartate/ornithine carbamoyltransferase superfamily. ATCase family. In terms of assembly, heterododecamer (2C3:3R2) of six catalytic PyrB chains organized as two trimers (C3), and six regulatory PyrI chains organized as three dimers (R2).

The catalysed reaction is carbamoyl phosphate + L-aspartate = N-carbamoyl-L-aspartate + phosphate + H(+). The protein operates within pyrimidine metabolism; UMP biosynthesis via de novo pathway; (S)-dihydroorotate from bicarbonate: step 2/3. Functionally, catalyzes the condensation of carbamoyl phosphate and aspartate to form carbamoyl aspartate and inorganic phosphate, the committed step in the de novo pyrimidine nucleotide biosynthesis pathway. This is Aspartate carbamoyltransferase catalytic subunit from Pelobacter propionicus (strain DSM 2379 / NBRC 103807 / OttBd1).